Consider the following 593-residue polypeptide: SPI-1 type 3 secretion system translocon protein SctE (593 aa).

2 coiled-coil regions span residues 151 to 208 (DTAK…ATDA) and 287 to 314 (EGRQ…NRIM). 2 helical membrane-spanning segments follow: residues 330 to 350 (VVAA…GLAV) and 409 to 429 (IVGA…VAVV).

The protein belongs to the SctE/SipB/YopB family. The core secretion machinery of the T3SS is composed of approximately 20 different proteins, including cytoplasmic components, a base, an export apparatus and a needle. This subunit is involved in the formation of a pore, called the translocon, in host membrane.

The protein localises to the secreted. The protein resides in the host membrane. Its function is as follows. Component of the type III secretion system 1 (SPI-1 T3SS), also called injectisome, which is used to inject bacterial effector proteins into eukaryotic host cells. SipB/SctE1 and SipC/SctB are inserted into the host membrane where they form a pore and allow the translocation of effector proteins into the cytosol of target cells. The protein is SPI-1 type 3 secretion system translocon protein SctE of Salmonella dublin.